The primary structure comprises 349 residues: Glycerol-3-phosphate dehydrogenase [NAD(+)], cytoplasmic (349 aa).

NAD(+) contacts are provided by residues 10–15 (GSGNWG), Phe41, and Phe97. Position 120 (Lys120) interacts with substrate. NAD(+) is bound at residue Ala153. Ser154 is modified (phosphoserine). The Proton acceptor role is filled by Lys204. An NAD(+)-binding site is contributed by Arg269. Substrate is bound at residue 269–270 (RN). Position 289 is an N6-succinyllysine (Lys289). The NAD(+) site is built by Lys296 and Gln298. Phosphotyrosine is present on Tyr326.

Belongs to the NAD-dependent glycerol-3-phosphate dehydrogenase family. As to quaternary structure, homodimer. As to expression, expressed in liver (at protein level).

The protein localises to the cytoplasm. The catalysed reaction is sn-glycerol 3-phosphate + NAD(+) = dihydroxyacetone phosphate + NADH + H(+). Its activity is regulated as follows. Inhibited by zinc ions and sulfate. In terms of biological role, has glycerol-3-phosphate dehydrogenase activity. The protein is Glycerol-3-phosphate dehydrogenase [NAD(+)], cytoplasmic of Homo sapiens (Human).